The primary structure comprises 121 residues: Large ribosomal subunit protein uL18 (121 aa).

It belongs to the universal ribosomal protein uL18 family. In terms of assembly, part of the 50S ribosomal subunit; part of the 5S rRNA/L5/L18/L25 subcomplex. Contacts the 5S and 23S rRNAs.

This is one of the proteins that bind and probably mediate the attachment of the 5S RNA into the large ribosomal subunit, where it forms part of the central protuberance. The sequence is that of Large ribosomal subunit protein uL18 from Verminephrobacter eiseniae (strain EF01-2).